The following is a 72-amino-acid chain: Heat shock factor-binding protein 1-like protein 1 (72 aa).

Positions 12–66 (DLLQNAAENLLQEVEEHFQALTATLNLRMEEMGNRIEDLQRNVDDLMAQAGIENS) form a coiled coil.

The protein belongs to the HSBP1 family.

In Rattus norvegicus (Rat), this protein is Heat shock factor-binding protein 1-like protein 1 (Hsbp1l1).